Consider the following 64-residue polypeptide: Large ribosomal subunit protein bL35 (64 aa).

Belongs to the bacterial ribosomal protein bL35 family.

In Shewanella halifaxensis (strain HAW-EB4), this protein is Large ribosomal subunit protein bL35.